The following is a 91-amino-acid chain: UPF0358 protein SSP1677 (91 aa).

The protein belongs to the UPF0358 family.

In Staphylococcus saprophyticus subsp. saprophyticus (strain ATCC 15305 / DSM 20229 / NCIMB 8711 / NCTC 7292 / S-41), this protein is UPF0358 protein SSP1677.